Consider the following 701-residue polypeptide: Aryl hydrocarbon receptor repressor (701 aa).

Residues 25–78 (TMGAEKSNPSKRHRDRLNTELDHLASLLPFSPDIISKLDKLSVLRLSVSYLRVK) form the bHLH domain. Positions 106–176 (PVQEGRLLLE…RQLHWAMDPP (71 aa)) constitute a PAS domain. Over residues 409–430 (TEQRSQESTTKLTRQPSKNEPS) the composition is skewed to polar residues. Residues 409–432 (TEQRSQESTTKLTRQPSKNEPSTC) are disordered. The needed for transcriptional repression stretch occupies residues 555-701 (ASTTSCLWLG…SKGSDGIFLP (147 aa)). Glycyl lysine isopeptide (Lys-Gly) (interchain with G-Cter in SUMO2) cross-links involve residues K583 and K660.

Interacts with ARNT, ANKRA2, HDAC4 and HDAC5. Interacts with ARNT; forms a heterodimer with ARNT.

The protein localises to the cytoplasm. It localises to the nucleus. Its function is as follows. Mediates dioxin toxicity and is involved in regulation of cell growth and differentiation. Represses the transcription activity of AHR by competing with this transcription factor for heterodimer formation with the ARNT and subsequently binding to the xenobiotic response element (XRE) sequence present in the promoter regulatory region of variety of genes. Represses CYP1A1 by binding the XRE sequence and recruiting ANKRA2, HDAC4 and/or HDAC5. Autoregulates its expression by associating with its own XRE site. In Mus musculus (Mouse), this protein is Aryl hydrocarbon receptor repressor (Ahrr).